The primary structure comprises 445 residues: MREIVHIQAGQCGNQIGAKFWEVISDEHGIDPSGTYSGDSDLQLERVDVFYNEATGGRYVPRAILMDLEPGTMDSVRAGPFGQLFRPDNFVFGQTGAGNNWAKGHYTEGAELIDAVLDVLRKEAEGCDCLQGFQITHSLGGGTGSGMGTLLISKIREEYPDRIMETFSVFPSPKVSDTVVEPYNATLSVHQLVENADEVQVIDNEALYDICFRTLKLTTPTYGDLNHLVSAAMSGVTCSLRFPGQLNSDLRKLAVNLIPFPRLHFFMYGFAPLTSRGSQQYRALTVPELTQQMFDAKNMMCTSDPRHGRYLTACAMFRGRMSTKEVDEQMLNVQNKNSSYFVEWIPHNTKSSVCDIPPLGLKMAVTFVGNSTAIQEMFKRVSDQFTAMFRRKAFLHWYTGEGMDEMEFTEAESNMNDLVSEYQQYQDATAEEEGEFEEEEGDVEA.

Residues Gln-11, Glu-69, Ser-138, Gly-142, Thr-143, Gly-144, Asn-204, and Asn-226 each contribute to the GTP site. Glu-69 serves as a coordination point for Mg(2+). Positions 426 to 445 are disordered; the sequence is QDATAEEEGEFEEEEGDVEA. The span at 429 to 445 shows a compositional bias: acidic residues; it reads TAEEEGEFEEEEGDVEA.

The protein belongs to the tubulin family. Dimer of alpha and beta chains. A typical microtubule is a hollow water-filled tube with an outer diameter of 25 nm and an inner diameter of 15 nM. Alpha-beta heterodimers associate head-to-tail to form protofilaments running lengthwise along the microtubule wall with the beta-tubulin subunit facing the microtubule plus end conferring a structural polarity. Microtubules usually have 13 protofilaments but different protofilament numbers can be found in some organisms and specialized cells. Interacts with DCX/apicortin; the interaction stabilizes microtubule assembly. The cofactor is Mg(2+).

Its subcellular location is the cytoplasm. It is found in the cytoskeleton. Tubulin is the major constituent of microtubules, a cylinder consisting of laterally associated linear protofilaments composed of alpha- and beta-tubulin heterodimers. Microtubules grow by the addition of GTP-tubulin dimers to the microtubule end, where a stabilizing cap forms. Below the cap, tubulin dimers are in GDP-bound state, owing to GTPase activity of alpha-tubulin. In Plasmodium falciparum, this protein is Tubulin beta chain.